The primary structure comprises 493 residues: Vinyl phenol reductase (493 aa).

FAD is bound by residues alanine 19, glutamate 38, serine 46, threonine 50, glycine 52, alanine 156, aspartate 224, asparagine 448, and valine 467.

The protein belongs to the FAD-dependent oxidoreductase 2 family. FRD/SDH subfamily. The cofactor is FAD.

It carries out the reaction 4-vinylphenol + NADH + H(+) = 4-ethylphenol + NAD(+). The catalysed reaction is 3,4-dihydroxystyrene + NADH + H(+) = 4-ethylcatechol + NAD(+). It catalyses the reaction 2-methoxy-4-vinylphenol + NADH + H(+) = 4-ethyl-2-methoxyphenol + NAD(+). In terms of biological role, involved in the production of ethylphenols during the degradation of hydroxycinnamic acids. Catalyzes the reduction of vinylphenols (4-vinylphenol (4-hydroxystyrene), 4-vinylcatechol (3,4-dihydroxystyrene), and 4-vinylguaiacol (2-methoxy-4-vinylphenol)) to their corresponding ethylphenols (4-ethylphenol, 4-ethylcatechol, and 4-ethylguaiacol, respectively) in the presence of NADH. These compounds are considered the most important flavor components of fermented soy sauce, and, on the other hand, are considered off flavor and responsible for sensorial wine and cider alteration. The 4-ethylphenol produced by the gut bacteria L.plantarum strain WCFS1 can get subsequent sulfation to 4-ethylphenyl sulfate (4EPS) by host sulfotransferase (SULT1A1); 4EPS can enter the brain and seems to alter brain activity. Therefore, this enzyme likely plays a role in gut microbiota-host metabolic interactions. This is Vinyl phenol reductase from Lactiplantibacillus plantarum (strain ATCC BAA-793 / NCIMB 8826 / WCFS1) (Lactobacillus plantarum).